A 217-amino-acid chain; its full sequence is 3,4-dihydroxy-2-butanone 4-phosphate synthase (217 aa).

D-ribulose 5-phosphate contacts are provided by residues arginine 37–glutamate 38, aspartate 42, arginine 150–threonine 154, and glutamate 174. Residue glutamate 38 participates in Mg(2+) binding. Residue histidine 153 coordinates Mg(2+).

It belongs to the DHBP synthase family. In terms of assembly, homodimer. Mg(2+) serves as cofactor. Requires Mn(2+) as cofactor.

It catalyses the reaction D-ribulose 5-phosphate = (2S)-2-hydroxy-3-oxobutyl phosphate + formate + H(+). It participates in cofactor biosynthesis; riboflavin biosynthesis; 2-hydroxy-3-oxobutyl phosphate from D-ribulose 5-phosphate: step 1/1. Catalyzes the conversion of D-ribulose 5-phosphate to formate and 3,4-dihydroxy-2-butanone 4-phosphate. The protein is 3,4-dihydroxy-2-butanone 4-phosphate synthase of Tolumonas auensis (strain DSM 9187 / NBRC 110442 / TA 4).